The following is a 1053-amino-acid chain: MGPTENQSFEIEFPNSSNTAAANSISTAINNNTTTAATITFTPANNNINNINNNNNNNNNNKFNSNFDIESNKENSINQSNINSNVNSFPLKIQTKTLNSTTTSSNNNNNNIFSIGFRPLSPRGVSPRFHSNSSSSCSSEISTPSSSTFLEDPNLIASNTISSNNSINNNNNNNNNNNNNNNNNNNDNSNNNINTNNINNNNNNTNNGENPQKKQRNSQILSKNFYSLSLHADSPKHSRSTTDLSTFLGMSDPDVMTYRSKTFCISDFHQFDIDTTTNDNKNKNNNTKSTDESSTFDGKSSNSVENNNMTIINNNNNNNNNNNNNNNNNNNNNNLNQDRPTIPTVAHSLSSNSIPHKFNSSNSLPPQMLSSSAPSLFSLLENSNNNNNNNNNNNNNNNNNNNNNNNNDNSNISINDESIVLISTPVKEYSYNRSLCLSDEEGGEDDEDDTPPTPIQLVRPTPTPINPSLSLSLSSSLNATNSTTYLHLGRSATVLLNPPLLVSSMRQHHNSPSSSPSQSIPIVQTRERSQSSLSFLSPYQQQYYPSSPELSPMVPTPLVNRIFNNINNNNNNNNNNNNNNNNNNNNNNNNNNNNNNNGTNSNNLNNQSTSEDRDDSPNTSLDQISGSPYKTPSKLSFHSPNSSAIFNSISNSQQTGKRSRTCLDFTKFSSHLLDEDSSCFSTQTNNNNTSSTGLISPSSSPKQQNVLIENTTNTTSNSSSSSSSTTTTTTTISVTNTLAAIQQNLNSNANLNNNNNNNNNNNNNISSYFSRSNSISSQRPPRPLSMSSSFISRQSPDIHISSNSLPKPVDTSNTNNNNENENDTNKLDKINNVNSNIAKIIEQQQQRNISNSNNNNNLTQDQDQQDDQFKAKLLKQLSGRQGYNGVSSESVYELLKNPTLINAIITVVDCRYKYEYDGGHIKNAINIPPTGSRQMVLDRFFKFPTPKNQQHVIIFHCEFSSKRAPDCYSLFRELDREHNEYPNIHYPEIYLLNGGYKKFFESFQGDMCEGNYIRMDDKLYQANLKEEEEKKKKEKITIRNIKAFKNRSHSFHV.

Disordered regions lie at residues 125–217 (VSPR…KQRN), 231–253 (HADSPKHSRSTTDLSTFLGMSDP), 273–412 (IDTT…NSNI), 438–466 (SDEEGGEDDEDDTPPTPIQLVRPTPTPIN), 504–532 (SMRQHHNSPSSSPSQSIPIVQTRERSQSS), 562–638 (IFNN…LSFH), 684–703 (TNNNNTSSTGLISPSSSPKQ), and 747–829 (SNAN…KLDK). Composition is skewed to low complexity over residues 131-147 (SNSSSSCSSEISTPSSS) and 158-207 (SNTI…NTNN). Low complexity predominate over residues 274–295 (DTTTNDNKNKNNNTKSTDESST). Positions 296–305 (FDGKSSNSVE) are enriched in polar residues. A compositionally biased stretch (low complexity) spans 306-336 (NNNMTIINNNNNNNNNNNNNNNNNNNNNNLN). Polar residues predominate over residues 347-365 (HSLSSNSIPHKFNSSNSLP). The segment covering 369–412 (LSSSAPSLFSLLENSNNNNNNNNNNNNNNNNNNNNNNNNDNSNI) has biased composition (low complexity). The segment covering 438–450 (SDEEGGEDDEDDT) has biased composition (acidic residues). Composition is skewed to low complexity over residues 511-522 (SPSSSPSQSIPI) and 564-606 (NNIN…NLNN). A compositionally biased stretch (polar residues) spans 617–638 (PNTSLDQISGSPYKTPSKLSFH). Low complexity-rich tracts occupy residues 684–701 (TNNNNTSSTGLISPSSSP) and 747–777 (SNANLNNNNNNNNNNNNNISSYFSRSNSISS). The segment covering 785–805 (SMSSSFISRQSPDIHISSNSL) has biased composition (polar residues). The region spanning 901 to 1001 (INAIITVVDC…LNGGYKKFFE (101 aa)) is the Rhodanese domain. Catalysis depends on Cys957, which acts as the Cysteine persulfide intermediate.

This sequence belongs to the MPI phosphatase family. Phosphorylated.

It carries out the reaction O-phospho-L-tyrosyl-[protein] + H2O = L-tyrosyl-[protein] + phosphate. In terms of biological role, tyrosine protein phosphatase which may function as a dosage-dependent inducer in mitotic control. The polypeptide is M-phase inducer phosphatase (cdc25) (Dictyostelium discoideum (Social amoeba)).